Consider the following 637-residue polypeptide: 1-deoxy-D-xylulose-5-phosphate synthase (637 aa).

Residues histidine 73 and 113-115 (SHA) contribute to the thiamine diphosphate site. Aspartate 144 provides a ligand contact to Mg(2+). Thiamine diphosphate contacts are provided by residues 145-146 (GA), asparagine 174, tyrosine 285, and glutamate 366. Asparagine 174 contacts Mg(2+).

This sequence belongs to the transketolase family. DXPS subfamily. In terms of assembly, homodimer. The cofactor is Mg(2+). It depends on thiamine diphosphate as a cofactor.

It carries out the reaction D-glyceraldehyde 3-phosphate + pyruvate + H(+) = 1-deoxy-D-xylulose 5-phosphate + CO2. It participates in metabolic intermediate biosynthesis; 1-deoxy-D-xylulose 5-phosphate biosynthesis; 1-deoxy-D-xylulose 5-phosphate from D-glyceraldehyde 3-phosphate and pyruvate: step 1/1. In terms of biological role, catalyzes the acyloin condensation reaction between C atoms 2 and 3 of pyruvate and glyceraldehyde 3-phosphate to yield 1-deoxy-D-xylulose-5-phosphate (DXP). The chain is 1-deoxy-D-xylulose-5-phosphate synthase from Streptomyces griseus subsp. griseus (strain JCM 4626 / CBS 651.72 / NBRC 13350 / KCC S-0626 / ISP 5235).